We begin with the raw amino-acid sequence, 423 residues long: Cyclin-dependent kinase 14 (423 aa).

Residues 62–85 (VGKESPKVRRHSSPSSPTSPKFGK) are disordered. A Protein kinase domain is found at 89–373 (YEKLEKLGEG…AQAALNHDYF (285 aa)). ATP-binding positions include 95–103 (LGEGSYATV) and Lys118. The active-site Proton acceptor is the Asp210.

Belongs to the protein kinase superfamily. CMGC Ser/Thr protein kinase family. CDC2/CDKX subfamily. As to quaternary structure, interacts with ccny; ccny mediates its recruitment to the plasma membrane and promotes phosphorylation of lrp6.

The protein localises to the cell membrane. It catalyses the reaction L-seryl-[protein] + ATP = O-phospho-L-seryl-[protein] + ADP + H(+). The catalysed reaction is L-threonyl-[protein] + ATP = O-phospho-L-threonyl-[protein] + ADP + H(+). Functionally, serine/threonine-protein kinase involved in the control of the eukaryotic cell cycle, whose activity is controlled by an associated cyclin. Acts as a cell-cycle regulator of Wnt signaling pathway during G2/M phase by mediating the phosphorylation of lrp6, leading to the activation of the Wnt signaling pathway. This is Cyclin-dependent kinase 14 (cdk14) from Xenopus tropicalis (Western clawed frog).